A 640-amino-acid chain; its full sequence is Zinc finger protein 549 (640 aa).

A KRAB domain is found at 27–140 (VTFEDIAVYF…PYTSVASGKW (114 aa)). A C2H2-type 1; degenerate zinc finger spans residues 217–241 (FQQRRYKCEQVFNEKVHVTEHQRVH). K223 is covalently cross-linked (Glycyl lysine isopeptide (Lys-Gly) (interchain with G-Cter in SUMO2)). A C2H2-type 2; degenerate zinc finger spans residues 247 to 269 (YKRREYGKSLNSKYLFVEHQRTH). 13 consecutive C2H2-type zinc fingers follow at residues 275-298 (YVCN…QRIH), 304-326 (YVCI…QRTH), 332-355 (YVCN…QRIH), 361-383 (YVCM…QRVH), 389-411 (YQCS…HRIH), 417-439 (YECK…QRIH), 445-467 (YVCI…QRIH), 473-495 (YECS…HKIH), 501-523 (YECS…QRIH), 529-551 (CECN…QKVH), 557-579 (CECS…QKVH), 585-607 (YNCT…QRIH), and 613-635 (YECG…QKVH).

This sequence belongs to the krueppel C2H2-type zinc-finger protein family.

It localises to the nucleus. May be involved in transcriptional regulation. This is Zinc finger protein 549 (ZNF549) from Homo sapiens (Human).